Here is a 95-residue protein sequence, read N- to C-terminus: Protein TusB (95 aa).

It belongs to the DsrH/TusB family. As to quaternary structure, heterohexamer, formed by a dimer of trimers. The hexameric TusBCD complex contains 2 copies each of TusB, TusC and TusD. The TusBCD complex interacts with TusE.

Its subcellular location is the cytoplasm. Functionally, part of a sulfur-relay system required for 2-thiolation of 5-methylaminomethyl-2-thiouridine (mnm(5)s(2)U) at tRNA wobble positions. The chain is Protein TusB from Pectobacterium atrosepticum (strain SCRI 1043 / ATCC BAA-672) (Erwinia carotovora subsp. atroseptica).